A 78-amino-acid polypeptide reads, in one-letter code: uncharacterized protein (78 aa).

Helical transmembrane passes span 13-35 (AGVG…PTGI) and 50-72 (GTTF…FYYF).

Its subcellular location is the cell membrane. This is an uncharacterized protein from Pasteurella multocida (strain Pm70).